We begin with the raw amino-acid sequence, 120 residues long: MFLLHEYDIFWAFLMISSVIPILAFLISGVLAPISQGPEKVSSYESGIEPMGDAWIQFRIRYYMFALVFVVFDVETVFLYPWAMSFDVLGVSVFIEALIFVLIPIVGSVYAWRKGALEWS.

The next 3 helical transmembrane spans lie at 9 to 29 (IFWAFLMISSVIPILAFLISG), 64 to 84 (MFALVFVVFDVETVFLYPWAM), and 88 to 108 (VLGVSVFIEALIFVLIPIVGS).

The protein belongs to the complex I subunit 3 family. As to quaternary structure, NDH is composed of at least 16 different subunits, 5 of which are encoded in the nucleus.

It is found in the plastid. The protein localises to the chloroplast thylakoid membrane. The enzyme catalyses a plastoquinone + NADH + (n+1) H(+)(in) = a plastoquinol + NAD(+) + n H(+)(out). It carries out the reaction a plastoquinone + NADPH + (n+1) H(+)(in) = a plastoquinol + NADP(+) + n H(+)(out). Functionally, NDH shuttles electrons from NAD(P)H:plastoquinone, via FMN and iron-sulfur (Fe-S) centers, to quinones in the photosynthetic chain and possibly in a chloroplast respiratory chain. The immediate electron acceptor for the enzyme in this species is believed to be plastoquinone. Couples the redox reaction to proton translocation, and thus conserves the redox energy in a proton gradient. The chain is NAD(P)H-quinone oxidoreductase subunit 3, chloroplastic from Amborella trichopoda.